A 254-amino-acid chain; its full sequence is UPF0246 protein FTW_0267 (254 aa).

Belongs to the UPF0246 family.

The sequence is that of UPF0246 protein FTW_0267 from Francisella tularensis subsp. tularensis (strain WY96-3418).